The following is a 664-amino-acid chain: Glycine--tRNA ligase beta subunit (664 aa).

This sequence belongs to the class-II aminoacyl-tRNA synthetase family. Tetramer of two alpha and two beta subunits.

Its subcellular location is the cytoplasm. It catalyses the reaction tRNA(Gly) + glycine + ATP = glycyl-tRNA(Gly) + AMP + diphosphate. The polypeptide is Glycine--tRNA ligase beta subunit (glyS) (Aquifex aeolicus (strain VF5)).